The sequence spans 83 residues: Large ribosomal subunit protein eL43 (83 aa).

The Zn(2+) site is built by cysteine 38, cysteine 41, cysteine 56, and cysteine 59. The C4-type zinc finger occupies cysteine 38–cysteine 59.

The protein belongs to the eukaryotic ribosomal protein eL43 family. Putative zinc-binding subfamily. As to quaternary structure, part of the 50S ribosomal subunit. Zn(2+) is required as a cofactor.

Binds to the 23S rRNA. In Pyrococcus horikoshii (strain ATCC 700860 / DSM 12428 / JCM 9974 / NBRC 100139 / OT-3), this protein is Large ribosomal subunit protein eL43.